Reading from the N-terminus, the 480-residue chain is Cytochrome P450 724B1 (480 aa).

The helical transmembrane segment at 6-26 threads the bilayer; it reads LVLAALVILLALLLTLVLSHF. Cys-426 lines the heme pocket.

The protein belongs to the cytochrome P450 family. Heme is required as a cofactor. As to expression, ubiquitously expressed at low levels, but preferentially in the internodes and the florets before flowering.

The protein localises to the membrane. It catalyses the reaction campesterol + reduced [NADPH--hemoprotein reductase] + O2 = (22S)-22-hydroxycampesterol + oxidized [NADPH--hemoprotein reductase] + H2O + H(+). Its pathway is plant hormone biosynthesis; brassinosteroid biosynthesis. Its function is as follows. Involved in brassinosteroid biosynthesis. May catalyze a C6-oxidation step and may be involved to supply 6-deoxotyphasterol and typhasterol. Involved in internode elongation and seed development. Catalyzes the conversion of campesterol (CR) to (22S)-22-hydroxycampesterol (22-OHCR, 22-hydroxyCR). The protein is Cytochrome P450 724B1 of Oryza sativa subsp. japonica (Rice).